We begin with the raw amino-acid sequence, 261 residues long: Aminoglycoside N(3)-acetyltransferase IV (261 aa).

Belongs to the antibiotic N-acetyltransferase family.

The catalysed reaction is a 2-deoxystreptamine antibiotic + acetyl-CoA = an N(3)-acetyl-2-deoxystreptamine antibiotic + CoA + H(+). In terms of biological role, resistance to antibiotics containing the 2-deoxy-streptamine ring including gentamicin, kanamycin, tobramycin, neomycin and apramycin. In Salmonella sp, this protein is Aminoglycoside N(3)-acetyltransferase IV (aacC4).